A 57-amino-acid polypeptide reads, in one-letter code: Large ribosomal subunit protein bL32c (57 aa).

This sequence belongs to the bacterial ribosomal protein bL32 family.

The protein resides in the plastid. It localises to the chloroplast. This chain is Large ribosomal subunit protein bL32c, found in Amborella trichopoda.